The following is a 288-amino-acid chain: Bifunctional protein FolD (288 aa).

NADP(+) is bound by residues 166–168 and Ile232; that span reads GAS.

This sequence belongs to the tetrahydrofolate dehydrogenase/cyclohydrolase family. Homodimer.

The catalysed reaction is (6R)-5,10-methylene-5,6,7,8-tetrahydrofolate + NADP(+) = (6R)-5,10-methenyltetrahydrofolate + NADPH. The enzyme catalyses (6R)-5,10-methenyltetrahydrofolate + H2O = (6R)-10-formyltetrahydrofolate + H(+). The protein operates within one-carbon metabolism; tetrahydrofolate interconversion. Catalyzes the oxidation of 5,10-methylenetetrahydrofolate to 5,10-methenyltetrahydrofolate and then the hydrolysis of 5,10-methenyltetrahydrofolate to 10-formyltetrahydrofolate. This chain is Bifunctional protein FolD, found in Escherichia coli O8 (strain IAI1).